The chain runs to 453 residues: uncharacterized protein (453 aa).

This sequence to S.faecalis plasmid PAM373 EP0012.

This is an uncharacterized protein from Listeria innocua serovar 6a (strain ATCC BAA-680 / CLIP 11262).